The sequence spans 347 residues: Holliday junction branch migration complex subunit RuvB (347 aa).

Residues 1–183 are large ATPase domain (RuvB-L); sequence MSEERFVSGH…FGVVLQLQFY (183 aa). ATP-binding positions include L22, R23, G64, K67, T68, T69, 130–132, R173, Y183, and R220; that span reads EDF. Position 68 (T68) interacts with Mg(2+). Residues 184 to 254 are small ATPAse domain (RuvB-S); sequence SEEELTRILM…VADAGLRMMG (71 aa). The segment at 257-347 is head domain (RuvB-H); that stretch reads AMGLDTVDHK…PEGPVQPRLF (91 aa). DNA is bound by residues R312 and R317.

It belongs to the RuvB family. Homohexamer. Forms an RuvA(8)-RuvB(12)-Holliday junction (HJ) complex. HJ DNA is sandwiched between 2 RuvA tetramers; dsDNA enters through RuvA and exits via RuvB. An RuvB hexamer assembles on each DNA strand where it exits the tetramer. Each RuvB hexamer is contacted by two RuvA subunits (via domain III) on 2 adjacent RuvB subunits; this complex drives branch migration. In the full resolvosome a probable DNA-RuvA(4)-RuvB(12)-RuvC(2) complex forms which resolves the HJ.

It is found in the cytoplasm. The catalysed reaction is ATP + H2O = ADP + phosphate + H(+). Its function is as follows. The RuvA-RuvB-RuvC complex processes Holliday junction (HJ) DNA during genetic recombination and DNA repair, while the RuvA-RuvB complex plays an important role in the rescue of blocked DNA replication forks via replication fork reversal (RFR). RuvA specifically binds to HJ cruciform DNA, conferring on it an open structure. The RuvB hexamer acts as an ATP-dependent pump, pulling dsDNA into and through the RuvAB complex. RuvB forms 2 homohexamers on either side of HJ DNA bound by 1 or 2 RuvA tetramers; 4 subunits per hexamer contact DNA at a time. Coordinated motions by a converter formed by DNA-disengaged RuvB subunits stimulates ATP hydrolysis and nucleotide exchange. Immobilization of the converter enables RuvB to convert the ATP-contained energy into a lever motion, pulling 2 nucleotides of DNA out of the RuvA tetramer per ATP hydrolyzed, thus driving DNA branch migration. The RuvB motors rotate together with the DNA substrate, which together with the progressing nucleotide cycle form the mechanistic basis for DNA recombination by continuous HJ branch migration. Branch migration allows RuvC to scan DNA until it finds its consensus sequence, where it cleaves and resolves cruciform DNA. This Symbiobacterium thermophilum (strain DSM 24528 / JCM 14929 / IAM 14863 / T) protein is Holliday junction branch migration complex subunit RuvB.